Here is a 321-residue protein sequence, read N- to C-terminus: Ribose-phosphate pyrophosphokinase (321 aa).

ATP-binding positions include 44-46 and 103-104; these read DGE and RQ. Mg(2+)-binding residues include His-137 and Asp-179. The active site involves Lys-202. Residues Arg-204, Asp-228, and 232–236 contribute to the D-ribose 5-phosphate site; that span reads DTAGT.

This sequence belongs to the ribose-phosphate pyrophosphokinase family. Class I subfamily. In terms of assembly, homohexamer. Mg(2+) is required as a cofactor.

The protein localises to the cytoplasm. It catalyses the reaction D-ribose 5-phosphate + ATP = 5-phospho-alpha-D-ribose 1-diphosphate + AMP + H(+). It functions in the pathway metabolic intermediate biosynthesis; 5-phospho-alpha-D-ribose 1-diphosphate biosynthesis; 5-phospho-alpha-D-ribose 1-diphosphate from D-ribose 5-phosphate (route I): step 1/1. In terms of biological role, involved in the biosynthesis of the central metabolite phospho-alpha-D-ribosyl-1-pyrophosphate (PRPP) via the transfer of pyrophosphoryl group from ATP to 1-hydroxyl of ribose-5-phosphate (Rib-5-P). The protein is Ribose-phosphate pyrophosphokinase of Staphylococcus haemolyticus (strain JCSC1435).